We begin with the raw amino-acid sequence, 255 residues long: Pyridoxine 5'-phosphate synthase (255 aa).

N6 serves as a coordination point for 3-amino-2-oxopropyl phosphate. 8–9 lines the 1-deoxy-D-xylulose 5-phosphate pocket; sequence DH. R17 serves as a coordination point for 3-amino-2-oxopropyl phosphate. Catalysis depends on H41, which acts as the Proton acceptor. Residues R43 and H48 each contribute to the 1-deoxy-D-xylulose 5-phosphate site. The active-site Proton acceptor is E68. 1-deoxy-D-xylulose 5-phosphate is bound at residue T96. Residue H208 is the Proton donor of the active site. Residues G209 and 230–231 contribute to the 3-amino-2-oxopropyl phosphate site; that span reads GQ.

Belongs to the PNP synthase family. Homooctamer; tetramer of dimers.

It is found in the cytoplasm. The catalysed reaction is 3-amino-2-oxopropyl phosphate + 1-deoxy-D-xylulose 5-phosphate = pyridoxine 5'-phosphate + phosphate + 2 H2O + H(+). It participates in cofactor biosynthesis; pyridoxine 5'-phosphate biosynthesis; pyridoxine 5'-phosphate from D-erythrose 4-phosphate: step 5/5. Catalyzes the complicated ring closure reaction between the two acyclic compounds 1-deoxy-D-xylulose-5-phosphate (DXP) and 3-amino-2-oxopropyl phosphate (1-amino-acetone-3-phosphate or AAP) to form pyridoxine 5'-phosphate (PNP) and inorganic phosphate. This chain is Pyridoxine 5'-phosphate synthase, found in Campylobacter lari (strain RM2100 / D67 / ATCC BAA-1060).